Reading from the N-terminus, the 159-residue chain is Transcriptional repressor NrdR (159 aa).

Over residues methionine 1 to serine 11 the composition is skewed to polar residues. Positions methionine 1–serine 21 are disordered. The segment at cysteine 3–cysteine 34 is a zinc-finger region. In terms of domain architecture, ATP-cone spans valine 49–aspartate 139.

The protein belongs to the NrdR family. The cofactor is Zn(2+).

Functionally, negatively regulates transcription of bacterial ribonucleotide reductase nrd genes and operons by binding to NrdR-boxes. The protein is Transcriptional repressor NrdR of Prochlorococcus marinus (strain MIT 9301).